Consider the following 278-residue polypeptide: MNSAGPKCVTLITGANTGLGFETAKALFARPEPYHILVGCRGQISRAEDAIEELQHLFPGTASTAQPLLIDISSDKSIALAFAEVQEEFGYLDIVVNNAGADLDTAVSSGRLTKREAWNQTWDVNVTGTQLFTETFAPLLLASKTQLPRLIFITSGLSSITEHANGSSPRYALAPAGWPKPDTLFLAYRSSKSGLNMIAAEWARVLRNDGVKVFNISPGFLDTGLGDDRASAERREKRALGAIDASVGGEFCANVVEGKLDEQSWPSKALRKNTVQPW.

NADP(+)-binding residues include leucine 19, aspartate 71, and asparagine 98. Serine 155 serves as the catalytic Proton donor. The NADP(+) site is built by tyrosine 188, lysine 192, and threonine 223. Tyrosine 188 functions as the Proton acceptor in the catalytic mechanism. Catalysis depends on lysine 192, which acts as the Lowers pKa of active site Tyr.

This sequence belongs to the short-chain dehydrogenases/reductases (SDR) family.

The protein operates within secondary metabolite biosynthesis; terpenoid biosynthesis. Functionally, short-chain dehydrogenase/reductase; part of the gene cluster that mediates the biosynthesis of eupenifeldin, a bistropolone meroterpenoid that acts as an antitumor agent. The first step of eupenifeldin biosynthesis is the biosynthesis of 3-methylorcinaldehyde performed by the non-reducing polyketide synthase eupA. Oxidative dearomatization of 3-methylorcinaldehyde likely catalyzed by the FAD-dependent monooxygenase eupB is followed by oxidative ring expansion by the 2-oxoglutarate-dependent dioxygenase eupC to provide the first tropolone metabolite, tropolone stipitaldehyde. In parallel, generation of sesquiterpene alpha-humulene from farnesylpyrophosphate (FPP) is catalyzed by the terpene cyclase eupE. The cytochrome P450 monooxygenase eupD then hydroxylates humulene to humulenol. The putative Diels-Alderase eupF probably catalyzes the formation of the tropolone-humulene skeleton by linking humulenol and the polyketide moiety. The short-chain dehydrogenase/reductase eupG and the flavin-dependent monooxygenase eupH are also essential for eupenifeldin biosynthesis and are likely the additional decorating enzymes of the tropolone-humulene skeleton to produce final eupenifeldin or derivatives. The chain is Short-chain dehydrogenase/reductase eupG from Phoma sp.